Consider the following 402-residue polypeptide: Phosphoglycerate kinase (402 aa).

Substrate contacts are provided by residues 24–26 (DLN), Arg-39, 62–65 (HLGR), Arg-121, and Arg-161. ATP is bound by residues Lys-211, Gly-299, Glu-330, and 359 to 362 (GGDS).

Belongs to the phosphoglycerate kinase family. As to quaternary structure, monomer.

The protein resides in the cytoplasm. The enzyme catalyses (2R)-3-phosphoglycerate + ATP = (2R)-3-phospho-glyceroyl phosphate + ADP. It participates in carbohydrate degradation; glycolysis; pyruvate from D-glyceraldehyde 3-phosphate: step 2/5. The protein is Phosphoglycerate kinase of Mycolicibacterium gilvum (strain PYR-GCK) (Mycobacterium gilvum (strain PYR-GCK)).